A 253-amino-acid polypeptide reads, in one-letter code: Sugar fermentation stimulation protein homolog (253 aa).

It belongs to the SfsA family.

The sequence is that of Sugar fermentation stimulation protein homolog from Prochlorococcus marinus (strain NATL1A).